The primary structure comprises 166 residues: CDP-archaeol synthase (166 aa).

4 helical membrane-spanning segments follow: residues 42-62 (LVLG…VQDA), 73-93 (VLSV…KSFV), 103-123 (AAWP…LLLI), and 128-148 (FAAV…TPLL).

The protein belongs to the CDP-archaeol synthase family. It depends on Mg(2+) as a cofactor.

Its subcellular location is the cell membrane. The catalysed reaction is 2,3-bis-O-(geranylgeranyl)-sn-glycerol 1-phosphate + CTP + H(+) = CDP-2,3-bis-O-(geranylgeranyl)-sn-glycerol + diphosphate. The protein operates within membrane lipid metabolism; glycerophospholipid metabolism. Catalyzes the formation of CDP-2,3-bis-(O-geranylgeranyl)-sn-glycerol (CDP-archaeol) from 2,3-bis-(O-geranylgeranyl)-sn-glycerol 1-phosphate (DGGGP) and CTP. This reaction is the third ether-bond-formation step in the biosynthesis of archaeal membrane lipids. The polypeptide is CDP-archaeol synthase (Methanosphaerula palustris (strain ATCC BAA-1556 / DSM 19958 / E1-9c)).